The primary structure comprises 448 residues: Methionine aminopeptidase 2 (448 aa).

Low complexity predominate over residues Met-1–Ala-17. Residues Met-1–Thr-87 form a disordered region. Positions Lys-21 to Gly-34 are enriched in basic and acidic residues. Positions Pro-35–Thr-46 are enriched in acidic residues. Residues Lys-55 to Thr-71 show a composition bias toward basic residues. His-200 contacts substrate. A divalent metal cation-binding residues include Asp-220, Asp-231, and His-300. His-308 serves as a coordination point for substrate. A divalent metal cation-binding residues include Glu-334 and Glu-429.

This sequence belongs to the peptidase M24A family. Methionine aminopeptidase eukaryotic type 2 subfamily. Co(2+) serves as cofactor. Requires Zn(2+) as cofactor. Mn(2+) is required as a cofactor. It depends on Fe(2+) as a cofactor.

It is found in the cytoplasm. The catalysed reaction is Release of N-terminal amino acids, preferentially methionine, from peptides and arylamides.. Functionally, cotranslationally removes the N-terminal methionine from nascent proteins. The N-terminal methionine is often cleaved when the second residue in the primary sequence is small and uncharged (Met-Ala-, Cys, Gly, Pro, Ser, Thr, or Val). The chain is Methionine aminopeptidase 2 from Malassezia globosa (strain ATCC MYA-4612 / CBS 7966) (Dandruff-associated fungus).